The primary structure comprises 272 residues: Orotidine 5'-phosphate decarboxylase (272 aa).

The Proton donor role is filled by lysine 93.

This sequence belongs to the OMP decarboxylase family. Type 2 subfamily.

It carries out the reaction orotidine 5'-phosphate + H(+) = UMP + CO2. The protein operates within pyrimidine metabolism; UMP biosynthesis via de novo pathway; UMP from orotate: step 2/2. This Roseiflexus sp. (strain RS-1) protein is Orotidine 5'-phosphate decarboxylase.